The chain runs to 105 residues: Large ribosomal subunit protein uL24 (105 aa).

It belongs to the universal ribosomal protein uL24 family. Part of the 50S ribosomal subunit.

Functionally, one of two assembly initiator proteins, it binds directly to the 5'-end of the 23S rRNA, where it nucleates assembly of the 50S subunit. Its function is as follows. One of the proteins that surrounds the polypeptide exit tunnel on the outside of the subunit. The sequence is that of Large ribosomal subunit protein uL24 from Novosphingobium aromaticivorans (strain ATCC 700278 / DSM 12444 / CCUG 56034 / CIP 105152 / NBRC 16084 / F199).